Here is a 427-residue protein sequence, read N- to C-terminus: Glutamate-1-semialdehyde 2,1-aminomutase (427 aa).

Lysine 267 is modified (N6-(pyridoxal phosphate)lysine).

The protein belongs to the class-III pyridoxal-phosphate-dependent aminotransferase family. HemL subfamily. Homodimer. Requires pyridoxal 5'-phosphate as cofactor.

The protein resides in the cytoplasm. It carries out the reaction (S)-4-amino-5-oxopentanoate = 5-aminolevulinate. The protein operates within porphyrin-containing compound metabolism; protoporphyrin-IX biosynthesis; 5-aminolevulinate from L-glutamyl-tRNA(Glu): step 2/2. This Geotalea uraniireducens (strain Rf4) (Geobacter uraniireducens) protein is Glutamate-1-semialdehyde 2,1-aminomutase.